We begin with the raw amino-acid sequence, 671 residues long: Acetyl-coenzyme A synthetase (671 aa).

A disordered region spans residues 1–21; the sequence is MPTASASESSSNQPESSNASG. Residues 221–224, Thr-339, and Asn-363 each bind CoA; that span reads RRGK. ATP-binding positions include 415 to 417, 439 to 444, Asp-528, and Arg-543; these read GEG and DTWWQT. A CoA-binding site is contributed by Ser-551. Arg-554 provides a ligand contact to ATP. Mg(2+) contacts are provided by Val-565, His-567, and Val-570. A CoA-binding site is contributed by Arg-611. Position 636 is an N6-acetyllysine (Lys-636).

This sequence belongs to the ATP-dependent AMP-binding enzyme family. Mg(2+) is required as a cofactor. Acetylated. Deacetylation by the SIR2-homolog deacetylase activates the enzyme.

The enzyme catalyses acetate + ATP + CoA = acetyl-CoA + AMP + diphosphate. Its function is as follows. Catalyzes the conversion of acetate into acetyl-CoA (AcCoA), an essential intermediate at the junction of anabolic and catabolic pathways. AcsA undergoes a two-step reaction. In the first half reaction, AcsA combines acetate with ATP to form acetyl-adenylate (AcAMP) intermediate. In the second half reaction, it can then transfer the acetyl group from AcAMP to the sulfhydryl group of CoA, forming the product AcCoA. In Rhodopirellula baltica (strain DSM 10527 / NCIMB 13988 / SH1), this protein is Acetyl-coenzyme A synthetase.